Reading from the N-terminus, the 265-residue chain is Mlc titration factor A (265 aa).

The Zn(2+) site is built by H111, H148, H152, and E211.

Belongs to the MtfA family. Monomer in solution. Interacts with Mlc. Zn(2+) serves as cofactor.

Its subcellular location is the cytoplasm. With respect to regulation, association between Mlc and MtfA may induce structural changes that activate the peptidase activity of MtfA while inactivating the DNA-binding ability of Mlc. The aminopeptidase activity is partially inhibited by metal chelators such as EDTA and phenantroline, but not by inhibitors for serine-, aspartyl-, or cysteine-proteases. Its function is as follows. Involved in the modulation of the activity of the glucose-phosphotransferase system (glucose-PTS). Interacts with the transcriptional repressor Mlc, preventing its interaction with DNA and leading to the modulation of expression of genes regulated by Mlc, including ptsG, which encodes the PTS system glucose-specific EIICB component. Shows zinc-dependent metallopeptidase activity. In vitro, can cleave several artificial substrates. The highest activity is observed for L-alanine fused to 4-nitroanilide (L-alanine-pNA). Shows lower activity towards proline-pNA and valine-pNA. This is Mlc titration factor A from Klebsiella pneumoniae subsp. pneumoniae (strain ATCC 700721 / MGH 78578).